The chain runs to 931 residues: NEDD4-binding protein 1 (931 aa).

One can recognise a KH-like domain in the interval 75-159; sequence GKAVRSAKEY…VQQFVKLFEN (85 aa). Disordered regions lie at residues 289 to 329, 413 to 474, and 547 to 571; these read MTSK…HNDS, QEWS…TQVD, and CTSAKSKTAVHQKSAGPSPVQNSHS. Basic and acidic residues-rich tracts occupy residues 290-309 and 319-329; these read TSKERQSCKRRFSDAEESLP and QEVKSVSHNDS. Over residues 416 to 434 the composition is skewed to polar residues; sequence SSKTPKTTNLRLGSNANSS. 2 stretches are compositionally biased toward basic and acidic residues: residues 435–444 and 456–467; these read HKLEDEDISC and NETRTERHKARD. Residues 547–557 are compositionally biased toward polar residues; that stretch reads CTSAKSKTAVH. The RNase NYN domain maps to 659-811; it reads LKHIIIDGSN…LGRNGPRLDD (153 aa). Positions 841 to 863 are disordered; that stretch reads LFMHVPNPASSSQQPKNRAHGDH. The interval 884 to 931 is coCUN; the sequence is RSASETVWLREALIKIFPDYEQRQKIDKILADHPFMRDLNALSAMVLD.

Belongs to the N4BP1 family.

It localises to the cytoplasm. The protein localises to the cytosol. The protein resides in the nucleus. Its subcellular location is the nucleolus. It is found in the PML body. Its function is as follows. Potent suppressor of cytokine production that acts as a regulator of innate immune signaling and inflammation. Acts as a key negative regulator of select cytokine and chemokine responses elicited by TRIF-independent Toll-like receptors (TLRs), thereby limiting inflammatory cytokine responses to minor insults. Has ribonuclease activity. In Gallus gallus (Chicken), this protein is NEDD4-binding protein 1.